The following is a 61-amino-acid chain: Large ribosomal subunit protein bL28A (61 aa).

This sequence belongs to the bacterial ribosomal protein bL28 family.

The chain is Large ribosomal subunit protein bL28A (rpmB1) from Streptomyces coelicolor (strain ATCC BAA-471 / A3(2) / M145).